The sequence spans 268 residues: Elongation factor Ts (268 aa).

The tract at residues 81–84 is involved in Mg(2+) ion dislocation from EF-Tu; that stretch reads TDFV.

The protein belongs to the EF-Ts family.

It is found in the cytoplasm. Associates with the EF-Tu.GDP complex and induces the exchange of GDP to GTP. It remains bound to the aminoacyl-tRNA.EF-Tu.GTP complex up to the GTP hydrolysis stage on the ribosome. The chain is Elongation factor Ts from Buchnera aphidicola subsp. Acyrthosiphon pisum (strain 5A).